We begin with the raw amino-acid sequence, 405 residues long: DNA polymerase IV 1 (405 aa).

In terms of domain architecture, UmuC spans Ile-23–Gly-203. Mg(2+) is bound by residues Asp-27 and Asp-120. Glu-121 is a catalytic residue.

Belongs to the DNA polymerase type-Y family. In terms of assembly, monomer. Mg(2+) is required as a cofactor.

The protein localises to the cytoplasm. It carries out the reaction DNA(n) + a 2'-deoxyribonucleoside 5'-triphosphate = DNA(n+1) + diphosphate. Functionally, poorly processive, error-prone DNA polymerase involved in untargeted mutagenesis. Copies undamaged DNA at stalled replication forks, which arise in vivo from mismatched or misaligned primer ends. These misaligned primers can be extended by PolIV. Exhibits no 3'-5' exonuclease (proofreading) activity. May be involved in translesional synthesis, in conjunction with the beta clamp from PolIII. In Agrobacterium fabrum (strain C58 / ATCC 33970) (Agrobacterium tumefaciens (strain C58)), this protein is DNA polymerase IV 1 (dinB1).